Here is an 89-residue protein sequence, read N- to C-terminus: MAHKKAGGSSRNGRDSAGRRLGVKKFGGELVIGGNIIIRQRGTKVYPGRNVGIGKDHTLFALTDGRVAFHSGKLGRKYVSVDTLAEAAE.

Residues Met1 to Arg20 are disordered.

This sequence belongs to the bacterial ribosomal protein bL27 family.

This is Large ribosomal subunit protein bL27 from Rhizorhabdus wittichii (strain DSM 6014 / CCUG 31198 / JCM 15750 / NBRC 105917 / EY 4224 / RW1) (Sphingomonas wittichii).